The following is a 287-amino-acid chain: Nucleotide-binding protein Dtpsy_0831 (287 aa).

10–17 (GMSGSGKS) contributes to the ATP binding site. A GTP-binding site is contributed by 59-62 (DVRS).

Belongs to the RapZ-like family.

Displays ATPase and GTPase activities. This Acidovorax ebreus (strain TPSY) (Diaphorobacter sp. (strain TPSY)) protein is Nucleotide-binding protein Dtpsy_0831.